A 270-amino-acid chain; its full sequence is Phosphonoacetaldehyde hydrolase (270 aa).

Catalysis depends on D11, which acts as the Nucleophile. Residues D11 and A13 each coordinate Mg(2+). K53 (schiff-base intermediate with substrate) is an active-site residue. D187 is a Mg(2+) binding site.

The protein belongs to the HAD-like hydrolase superfamily. PhnX family. In terms of assembly, homodimer. Mg(2+) is required as a cofactor.

It catalyses the reaction phosphonoacetaldehyde + H2O = acetaldehyde + phosphate + H(+). Its function is as follows. Involved in phosphonate degradation. In Salmonella gallinarum (strain 287/91 / NCTC 13346), this protein is Phosphonoacetaldehyde hydrolase.